Here is a 265-residue protein sequence, read N- to C-terminus: Synaptoporin (265 aa).

The Cytoplasmic portion of the chain corresponds to 1–4 (MCMV). Residues 1 to 202 (MCMVIFAPLF…NIWFVFKETG (202 aa)) enclose the MARVEL domain. The helical transmembrane segment at 5–25 (IFAPLFAIFAFATCGGYSGGL) threads the bilayer. Residues 26–81 (RLSVDCVNKTESNLSIDIAFAYPFRLHQVTFEVPTCEGKERQKLALIGDSSSSAEF) are Vesicular-facing. N-linked (GlcNAc...) asparagine glycans are attached at residues asparagine 33 and asparagine 38. The helical transmembrane segment at 82-102 (FVTVAVFAFLYSLAATVVYIF) threads the bilayer. The Cytoplasmic portion of the chain corresponds to 103-114 (FQNKYRENNRGP). A helical membrane pass occupies residues 115–135 (LIDFIVTVVFSFLWLVGSSAW). Topologically, residues 136 to 177 (AKGLSDVKVATDPKEVLLLMSACKQPSNKCMAIHSPVMSSLN) are vesicular. A helical membrane pass occupies residues 178–198 (TSVVFGFLNFILWAGNIWFVF). The Cytoplasmic portion of the chain corresponds to 199–265 (KETGWHSSGQ…TGPTSFTNQI (67 aa)). 5 repeat units span residues 210-214 (YLSDP), 222-226 (YNQGG), 227-231 (YNQDS), 232-236 (YGSSS), and 238-242 (YSQQA). A 5 X approximate repeats region spans residues 210 to 242 (YLSDPMEKHSSSYNQGGYNQDSYGSSSGYSQQA). Position 212 is a phosphoserine (serine 212). Residues 221 to 265 (SYNQGGYNQDSYGSSSGYSQQASLGPTSDEFGQQPTGPTSFTNQI) form a disordered region. A compositionally biased stretch (low complexity) spans 224–243 (QGGYNQDSYGSSSGYSQQAS). A compositionally biased stretch (polar residues) spans 244 to 265 (LGPTSDEFGQQPTGPTSFTNQI).

Belongs to the synaptophysin/synaptobrevin family.

It is found in the cytoplasmic vesicle. It localises to the secretory vesicle. The protein resides in the synaptic vesicle membrane. Its subcellular location is the synapse. The protein localises to the synaptosome. Its function is as follows. Intrinsic membrane protein of small synaptic vesicles. Probable vesicular channel protein. The chain is Synaptoporin (SYNPR) from Homo sapiens (Human).